Reading from the N-terminus, the 318-residue chain is UDP-N-acetylenolpyruvoylglucosamine reductase (318 aa).

The FAD-binding PCMH-type domain maps to isoleucine 38 to glycine 204. Residue arginine 182 is part of the active site. Basic and acidic residues predominate over residues serine 212–lysine 229. The tract at residues serine 212 to glycine 232 is disordered. Serine 233 acts as the Proton donor in catalysis. Residue glutamate 310 is part of the active site.

Belongs to the MurB family. It depends on FAD as a cofactor.

It is found in the cytoplasm. It catalyses the reaction UDP-N-acetyl-alpha-D-muramate + NADP(+) = UDP-N-acetyl-3-O-(1-carboxyvinyl)-alpha-D-glucosamine + NADPH + H(+). Its pathway is cell wall biogenesis; peptidoglycan biosynthesis. Cell wall formation. The polypeptide is UDP-N-acetylenolpyruvoylglucosamine reductase (Leptospira interrogans serogroup Icterohaemorrhagiae serovar copenhageni (strain Fiocruz L1-130)).